Here is a 73-residue protein sequence, read N- to C-terminus: Guanine nucleotide-binding protein G(I)/G(S)/G(O) subunit gamma-11 (73 aa).

The interval 54-73 (VKGIPEDKNPFKEKGSCIIS) is disordered. Position 70 is a cysteine methyl ester (cysteine 70). Residue cysteine 70 is the site of S-farnesyl cysteine attachment. A propeptide spans 71–73 (IIS) (removed in mature form).

Belongs to the G protein gamma family. G proteins are composed of 3 units, alpha, beta and gamma. Interacts with beta-1 and beta-3, but not with beta-2.

It is found in the cell membrane. Its function is as follows. Guanine nucleotide-binding proteins (G proteins) are involved as a modulator or transducer in various transmembrane signaling systems. The beta and gamma chains are required for the GTPase activity, for replacement of GDP by GTP, and for G protein-effector interaction. This Bos taurus (Bovine) protein is Guanine nucleotide-binding protein G(I)/G(S)/G(O) subunit gamma-11 (GNG11).